The sequence spans 795 residues: Phenylalanine--tRNA ligase beta subunit (795 aa).

Residues 39–149 (SGEFSGVVVA…ADAPIGVDIR (111 aa)) form the tRNA-binding domain. Residues 402–477 (PKQPIIRLRR…RIYGYNRIPN (76 aa)) form the B5 domain. Residues Asp-455, Asp-461, Glu-464, and Glu-465 each coordinate Mg(2+). The FDX-ACB domain occupies 701–794 (SKFPANNRDI…LAQRFQASLR (94 aa)).

This sequence belongs to the phenylalanyl-tRNA synthetase beta subunit family. Type 1 subfamily. As to quaternary structure, tetramer of two alpha and two beta subunits. Mg(2+) serves as cofactor.

The protein resides in the cytoplasm. The catalysed reaction is tRNA(Phe) + L-phenylalanine + ATP = L-phenylalanyl-tRNA(Phe) + AMP + diphosphate + H(+). This is Phenylalanine--tRNA ligase beta subunit from Haemophilus ducreyi (strain 35000HP / ATCC 700724).